Here is a 245-residue protein sequence, read N- to C-terminus: Octanoyltransferase (245 aa).

Residues 54–238 (GEATELVWLL…AFENIFGETR (185 aa)) form the BPL/LPL catalytic domain. Substrate is bound by residues 92 to 99 (RGGQLTYH), 167 to 169 (AIG), and 180 to 182 (GIA). Catalysis depends on cysteine 198, which acts as the Acyl-thioester intermediate.

Belongs to the LipB family.

Its subcellular location is the cytoplasm. It catalyses the reaction octanoyl-[ACP] + L-lysyl-[protein] = N(6)-octanoyl-L-lysyl-[protein] + holo-[ACP] + H(+). It functions in the pathway protein modification; protein lipoylation via endogenous pathway; protein N(6)-(lipoyl)lysine from octanoyl-[acyl-carrier-protein]: step 1/2. Its function is as follows. Catalyzes the transfer of endogenously produced octanoic acid from octanoyl-acyl-carrier-protein onto the lipoyl domains of lipoate-dependent enzymes. Lipoyl-ACP can also act as a substrate although octanoyl-ACP is likely to be the physiological substrate. The chain is Octanoyltransferase from Rhodopseudomonas palustris (strain TIE-1).